Here is a 172-residue protein sequence, read N- to C-terminus: Large ribosomal subunit protein uL10 (172 aa).

Belongs to the universal ribosomal protein uL10 family. In terms of assembly, part of the ribosomal stalk of the 50S ribosomal subunit. The N-terminus interacts with L11 and the large rRNA to form the base of the stalk. The C-terminus forms an elongated spine to which L12 dimers bind in a sequential fashion forming a multimeric L10(L12)X complex.

Functionally, forms part of the ribosomal stalk, playing a central role in the interaction of the ribosome with GTP-bound translation factors. The sequence is that of Large ribosomal subunit protein uL10 from Dinoroseobacter shibae (strain DSM 16493 / NCIMB 14021 / DFL 12).